We begin with the raw amino-acid sequence, 150 residues long: CCAAT/enhancer-binding protein gamma (150 aa).

A Glycyl lysine isopeptide (Lys-Gly) (interchain with G-Cter in SUMO2) cross-link involves residue K3. Residues 27 to 94 form a disordered region; that stretch reads GLQQVPQLVP…QKAQDTLQRV (68 aa). The segment covering 28–37 has biased composition (low complexity); sequence LQQVPQLVPA. Positions 56 to 72 are enriched in basic and acidic residues; it reads SPMDRNSDEYRQRRERN. In terms of domain architecture, bZIP spans 62–125; sequence SDEYRQRRER…SVLKDLFLEH (64 aa). Positions 66–93 are basic motif; it reads RQRRERNNMAVKKSRLKSKQKAQDTLQR. The segment at 97–118 is leucine-zipper; the sequence is LKEENERLEAKIKLLTKELSVL.

This sequence belongs to the bZIP family. C/EBP subfamily. As to quaternary structure, binds DNA as a dimer and can form stable heterodimers with CEBPA and CEBPB. Interacts with ZNF638; this interaction increases transcriptional activation.

Its subcellular location is the nucleus. Transcription factor that binds to the promoter and the enhancer regions of target genes. Binds to the promoter and the enhancer of the alpha-1-fetoprotein gene. Binds to the enhancer element PRE-I (positive regulatory element-I) of the IL-4 gene. Binds to the promoter and the enhancer of the immunoglobulin heavy chain. Binds to GPE1, a cis-acting element in the G-CSF gene promoter. The protein is CCAAT/enhancer-binding protein gamma (Cebpg) of Rattus norvegicus (Rat).